A 301-amino-acid chain; its full sequence is Prohibitin-2 (301 aa).

Necessary for transcriptional repression stretches follow at residues 19 to 49 and 150 to 174; these read MGTA…GHRA and ASQL…RAKD. Positions 191-237 form a coiled coil; sequence REYTAAVESKQVAQQEAQRAQFLVEKAKQDQKQKIVQAEGEAAAAKM.

It belongs to the prohibitin family. The mitochondrial prohibitin complex consists of two subunits (PHB1 and PHB2), assembled into a membrane-associated ring-shaped supercomplex of approximately 1 mDa.

The protein resides in the mitochondrion inner membrane. It localises to the cytoplasm. It is found in the nucleus. Its subcellular location is the cell membrane. Functionally, protein with pleiotropic attributes mediated in a cell-compartment- and tissue-specific manner, which include the plasma membrane-associated cell signaling functions, mitochondrial chaperone, and transcriptional co-regulator of transcription factors and sex steroid hormones in the nucleus. Its function is as follows. In the mitochondria, together with PHB, forms large ring complexes (prohibitin complexes) in the inner mitochondrial membrane (IMM) and functions as a chaperone protein that stabilizes mitochondrial respiratory enzymes and maintains mitochondrial integrity in the IMM, which is required for mitochondrial morphogenesis, neuronal survival, and normal lifespan. In the nucleus, serves as transcriptional co-regulator. This Xenopus tropicalis (Western clawed frog) protein is Prohibitin-2 (phb2).